The primary structure comprises 264 residues: uncharacterized protein (264 aa).

The next 6 helical transmembrane spans lie at L23–I43, F59–L79, L91–L111, F150–L170, A190–W210, and W233–I253.

The protein localises to the cell membrane. This is an uncharacterized protein from Mycoplasma genitalium (strain ATCC 33530 / DSM 19775 / NCTC 10195 / G37) (Mycoplasmoides genitalium).